We begin with the raw amino-acid sequence, 102 residues long: Flagellar hook-basal body complex protein FliE (102 aa).

The protein belongs to the FliE family.

The protein resides in the bacterial flagellum basal body. The chain is Flagellar hook-basal body complex protein FliE from Oceanobacillus iheyensis (strain DSM 14371 / CIP 107618 / JCM 11309 / KCTC 3954 / HTE831).